The sequence spans 448 residues: Glutamyl-tRNA reductase (448 aa).

Residues 49–52 (TCNR), Ser-109, 114–116 (ETQ), and Gln-120 each bind substrate. Cys-50 acts as the Nucleophile in catalysis. 189-194 (GAGEMS) provides a ligand contact to NADP(+).

Belongs to the glutamyl-tRNA reductase family. Homodimer.

It carries out the reaction (S)-4-amino-5-oxopentanoate + tRNA(Glu) + NADP(+) = L-glutamyl-tRNA(Glu) + NADPH + H(+). It participates in porphyrin-containing compound metabolism; protoporphyrin-IX biosynthesis; 5-aminolevulinate from L-glutamyl-tRNA(Glu): step 1/2. Catalyzes the NADPH-dependent reduction of glutamyl-tRNA(Glu) to glutamate 1-semialdehyde (GSA). The polypeptide is Glutamyl-tRNA reductase (Staphylococcus aureus (strain bovine RF122 / ET3-1)).